Reading from the N-terminus, the 286-residue chain is Beta-lactamase SHV-2 (286 aa).

A signal peptide spans 1–21 (MRYIRLCIISLLATLPLAVHA). S66 acts as the Acyl-ester intermediate in catalysis. The cysteines at positions 73 and 119 are disulfide-linked. The Proton acceptor role is filled by E164. 230 to 232 (KTG) contributes to the substrate binding site.

Belongs to the class-A beta-lactamase family.

It carries out the reaction a beta-lactam + H2O = a substituted beta-amino acid. This enzyme hydrolyzes cefotaxime, ceftazidime and other broad spectrum cephalosporins. This Escherichia coli protein is Beta-lactamase SHV-2 (bla).